The chain runs to 284 residues: Actin-like protein ARP10 (284 aa).

Belongs to the actin family. ARP10 subfamily. As to quaternary structure, self-associates. Component of the dynactin complex composed of at least ARP1, JNM1, NIP100 and ARP10. Dynactin comprises a short rod of the ARP1 filament attached to ARP10 at its pointed-end and probably associated with the capping protein at its barbed-end. The rod is implicated in dynein cargo binding. A sidearm formed by NIP100 projects from the ARP1 filament and is implicated in motor binding. Interacts with ARP1 and JNM1.

It localises to the cytoplasm. The protein localises to the cytoskeleton. In terms of biological role, pointed-end-associated component of the dynactin complex which assists cytoplasmic dynein by increasing its processivity and by regulation of its cargo binding. The dynactin complex is required for the spindle translocation late in anaphase and is involved in a cell wall synthesis checkpoint. May regulate the association of the dynactin complex with the plasma membrane. This is Actin-like protein ARP10 (ARP10) from Saccharomyces cerevisiae (strain ATCC 204508 / S288c) (Baker's yeast).